Consider the following 223-residue polypeptide: Ribosome assembly factor mrt4 (223 aa).

This sequence belongs to the universal ribosomal protein uL10 family. In terms of assembly, associates with the pre-60S ribosomal particle.

The protein resides in the nucleus. It is found in the nucleolus. It localises to the cytoplasm. Its function is as follows. Component of the ribosome assembly machinery. Nuclear paralog of the ribosomal protein P0, it binds pre-60S subunits at an early stage of assembly in the nucleolus, and is replaced by P0 in cytoplasmic pre-60S subunits and mature 80S ribosomes. In Dictyostelium discoideum (Social amoeba), this protein is Ribosome assembly factor mrt4.